A 160-amino-acid chain; its full sequence is Putative NrdI-like protein (160 aa).

Belongs to the NrdI family.

The chain is Putative NrdI-like protein from Streptococcus pyogenes serotype M3 (strain ATCC BAA-595 / MGAS315).